A 501-amino-acid polypeptide reads, in one-letter code: Adenylosuccinate synthetase 2, chloroplastic (501 aa).

Residues glycine 87 to lysine 93 and glycine 115 to threonine 117 contribute to the GTP site. Aspartate 88 acts as the Proton acceptor in catalysis. 2 residues coordinate Mg(2+): aspartate 88 and glycine 115. Residues aspartate 88 to lysine 91, asparagine 113 to histidine 116, threonine 205, arginine 219, glutamine 300, threonine 315, and arginine 379 contribute to the IMP site. Histidine 116 functions as the Proton donor in the catalytic mechanism. Substrate is bound at residue asparagine 375–arginine 381. Residues arginine 381, lysine 407–aspartate 409, and glycine 490–glycine 492 each bind GTP.

The protein belongs to the adenylosuccinate synthetase family. Homodimer. It depends on Mg(2+) as a cofactor.

It is found in the plastid. It localises to the chloroplast. It catalyses the reaction IMP + L-aspartate + GTP = N(6)-(1,2-dicarboxyethyl)-AMP + GDP + phosphate + 2 H(+). It functions in the pathway purine metabolism; AMP biosynthesis via de novo pathway; AMP from IMP: step 1/2. In terms of biological role, plays an important role in the de novo pathway and in the salvage pathway of purine nucleotide biosynthesis. Catalyzes the first committed step in the biosynthesis of AMP from IMP. The chain is Adenylosuccinate synthetase 2, chloroplastic from Capsicum frutescens (Cayenne pepper).